Here is a 136-residue protein sequence, read N- to C-terminus: UPF0299 membrane protein PM0880 (136 aa).

The next 4 membrane-spanning stretches (helical) occupy residues 5 to 25 (IVDL…GEWI), 29 to 49 (LNIG…GLTF), 67 to 87 (YMAL…DVLF), and 92 to 112 (VLLL…GLLS).

Belongs to the UPF0299 family.

The protein localises to the cell inner membrane. The polypeptide is UPF0299 membrane protein PM0880 (Pasteurella multocida (strain Pm70)).